Here is a 333-residue protein sequence, read N- to C-terminus: Mitochondrial fission regulator 1 (333 aa).

The N-terminal 48 residues, 1–48, are a transit peptide targeting the mitochondrion; it reads MLGWIKRLIRMVFQQVGVSMQSVLWSRKPYGSSRSIVRKIGTNLSLIQ. At Ser-119 the chain carries Phosphoserine. Positions 137–169 form a coiled coil; that stretch reads NEEALQKICALENELAALRAQIAKIVTQQEQQN. Disordered regions lie at residues 177–198 and 288–315; these read STTF…PPPA and SDSQ…FGPH. The necessary and sufficient to promote mitochondrial fission stretch occupies residues 179–304; that stretch reads TFGTIPPHPP…EKGIPKSESE (126 aa). Residues 184 to 198 are compositionally biased toward pro residues; the sequence is PPHPPPPPPPLPPPA. The segment covering 288-307 has biased composition (basic and acidic residues); that stretch reads SDSQDEVEKGIPKSESEATS.

The protein belongs to the MTFR1 family.

Its subcellular location is the mitochondrion. Its function is as follows. May play a role in mitochondrial aerobic respiration. May also regulate mitochondrial organization and fission. This Homo sapiens (Human) protein is Mitochondrial fission regulator 1 (MTFR1).